A 359-amino-acid polypeptide reads, in one-letter code: Nicotinate-nucleotide--dimethylbenzimidazole phosphoribosyltransferase (359 aa).

The active-site Proton acceptor is E318.

This sequence belongs to the CobT family. As to quaternary structure, homodimer.

It catalyses the reaction 5,6-dimethylbenzimidazole + nicotinate beta-D-ribonucleotide = alpha-ribazole 5'-phosphate + nicotinate + H(+). It participates in nucleoside biosynthesis; alpha-ribazole biosynthesis; alpha-ribazole from 5,6-dimethylbenzimidazole: step 1/2. Catalyzes the synthesis of alpha-ribazole-5'-phosphate from nicotinate mononucleotide (NAMN) and 5,6-dimethylbenzimidazole (DMB). The polypeptide is Nicotinate-nucleotide--dimethylbenzimidazole phosphoribosyltransferase (Escherichia coli O157:H7).